An 847-amino-acid chain; its full sequence is Bifunctional protein argC, mitochondrial (847 aa).

The interval 100–331 (QIVLVKIGGG…PPSTSITITS (232 aa)) is acetylglutamate kinase. An N-acetyltransferase domain is found at 352-508 (GEVMHSHESP…CLSQSSTYLS (157 aa)). Residues 531 to 846 (FRVGLIGARG…LDELASIKNE (316 aa)) form an N-acetyl-gamma-glutamyl-phosphate reductase region. Cys665 is an active-site residue.

The protein in the N-terminal section; belongs to the acetylglutamate kinase family. It in the C-terminal section; belongs to the NAGSA dehydrogenase family.

Its subcellular location is the mitochondrion. It catalyses the reaction N-acetyl-L-glutamate 5-semialdehyde + phosphate + NADP(+) = N-acetyl-L-glutamyl 5-phosphate + NADPH + H(+). It carries out the reaction N-acetyl-L-glutamate + ATP = N-acetyl-L-glutamyl 5-phosphate + ADP. It functions in the pathway amino-acid biosynthesis; L-arginine biosynthesis; N(2)-acetyl-L-ornithine from L-glutamate: step 2/4. The protein operates within amino-acid biosynthesis; L-arginine biosynthesis; N(2)-acetyl-L-ornithine from L-glutamate: step 3/4. In Dictyostelium discoideum (Social amoeba), this protein is Bifunctional protein argC, mitochondrial (argC).